A 1500-amino-acid polypeptide reads, in one-letter code: Carbamoyl-phosphate synthase [ammonia], mitochondrial (1500 aa).

A mitochondrion-targeting transit peptide spans 1-38; that stretch reads MTRILTACKVVKTLKSGFGFANVTTKRQWDFSRPGIRL. Residues 39 to 218 are anthranilate phosphoribosyltransferase homolog; that stretch reads LSVKAKTAHI…VKVFGKGNPT (180 aa). K44, K55, K57, and K119 each carry N6-acetyllysine; alternate. Residues K44, K55, K57, and K119 each carry the N6-succinyllysine; alternate modification. K55 is subject to N6-glutaryllysine; alternate. A Phosphoserine modification is found at S148. 2 positions are modified to N6-acetyllysine; alternate: K157 and K171. K157 is modified (N6-succinyllysine; alternate). Position 171 is an N6-glutaryllysine; alternate (K171). K176 carries the post-translational modification N6-glutaryllysine. K182 is modified (N6-acetyllysine). At S189 the chain carries Phosphoserine. K197 carries the post-translational modification N6-acetyllysine. K207, K210, K214, K219, and K228 each carry N6-acetyllysine; alternate. The residue at position 207 (K207) is an N6-succinyllysine; alternate. An N6-glutaryllysine; alternate mark is found at K207, K210, K214, K219, and K228. K214 bears the N6-succinyllysine; alternate mark. In terms of domain architecture, Glutamine amidotransferase type-1 spans 219–404; sequence KVVAVDCGIK…FSLIKKGKGT (186 aa). K237 is subject to N6-glutaryllysine. K279 bears the N6-acetyllysine mark. An N6-acetyllysine; alternate mark is found at K280, K287, K307, and K310. At K280 the chain carries N6-glutaryllysine; alternate. 2 positions are modified to N6-succinyllysine; alternate: K287 and K307. N6-glutaryllysine; alternate is present on residues K307 and K310. The residue at position 400 (K400) is an N6-succinyllysine. An N6-succinyllysine; alternate mark is found at K402 and K412. Residues K402, K412, K453, and K458 each carry the N6-glutaryllysine; alternate modification. N6-acetyllysine; alternate occurs at positions 412, 453, 458, 522, 527, and 532. N6-succinyllysine; alternate occurs at positions 458, 522, and 527. 2 positions are modified to N6-glutaryllysine; alternate: K527 and K532. S537 is modified (phosphoserine; alternate). An O-linked (GlcNAc) serine; alternate glycan is attached at S537. Phosphoserine is present on S540. An ATP-grasp 1 domain is found at 551–743; the sequence is SDKLNEINEK…LAFIAAKIAL (193 aa). Residues K553 and K560 each carry the N6-acetyllysine; alternate modification. Residues K553 and K560 each carry the N6-succinyllysine; alternate modification. N6-glutaryllysine; alternate is present on K553. A Phosphoserine modification is found at S569. An N6-acetyllysine; alternate mark is found at K575, K603, and K612. Residues K575, K603, and K612 each carry the N6-succinyllysine; alternate modification. Position 630 is an N6-acetyllysine (K630). K728 bears the N6-glutaryllysine mark. Residues K751, K757, K772, K793, K811, K831, K840, K841, K856, K875, K889, and K892 each carry the N6-acetyllysine; alternate modification. 2 positions are modified to N6-succinyllysine; alternate: K751 and K757. An N6-glutaryllysine; alternate mark is found at K757, K772, K793, and K811. K793 bears the N6-succinyllysine; alternate mark. K831 and K840 each carry N6-succinyllysine; alternate. N6-glutaryllysine; alternate is present on residues K841, K856, K875, K889, and K892. N6-succinyllysine; alternate occurs at positions 875, 889, and 892. 2 positions are modified to phosphoserine: S896 and S898. 3 positions are modified to N6-acetyllysine; alternate: K908, K915, and K919. N6-glutaryllysine; alternate occurs at positions 908, 915, and 919. An N6-succinyllysine; alternate mark is found at K915 and K919. K935 carries the N6-acetyllysine modification. S1036 carries the post-translational modification Phosphoserine. Position 1074 is an N6-acetyllysine; alternate (K1074). N6-succinyllysine; alternate is present on K1074. Residue K1074 is modified to N6-glutaryllysine; alternate. Phosphoserine is present on residues S1079, S1090, and S1093. The ATP-grasp 2 domain maps to 1093-1284; the sequence is SAVLDELKVA…FIDVATKVMI (192 aa). K1100 carries the N6-acetyllysine; alternate modification. Residue K1100 is modified to N6-succinyllysine; alternate. The residue at position 1149 (K1149) is an N6-succinyllysine. N6-acetyllysine; alternate is present on residues K1168 and K1183. Residues K1168 and K1183 each carry the N6-succinyllysine; alternate modification. 2 positions are modified to N6-glutaryllysine; alternate: K1168 and K1183. S1203 carries the post-translational modification Phosphoserine. At K1222 the chain carries N6-acetyllysine. The residue at position 1224 (K1224) is an N6-glutaryllysine. An N6-acetyllysine; alternate mark is found at K1232, K1269, and K1291. N6-succinyllysine; alternate is present on residues K1232, K1269, and K1291. The O-linked (GlcNAc) serine glycan is linked to S1331. T1332 carries an O-linked (GlcNAc) threonine glycan. The 146-residue stretch at 1355–1500 folds into the MGS-like domain; the sequence is FKIPQKGILI…YRQYSAGKAA (146 aa). Residue K1356 is modified to N6-acetyllysine; alternate. Residues K1356 and K1360 each carry the N6-succinyllysine; alternate modification. 2 positions are modified to N6-glutaryllysine; alternate: K1356 and K1360. The N-acetyl-L-glutamate site is built by T1391, T1394, and W1410. Residues S1419 and S1431 each carry the phosphoserine modification. N-acetyl-L-glutamate-binding residues include N1437 and N1440. N6-acetyllysine; alternate is present on K1444. K1444 is modified (N6-succinyllysine; alternate). N1449 lines the N-acetyl-L-glutamate pocket. 3 positions are modified to N6-acetyllysine; alternate: K1471, K1479, and K1486. 3 positions are modified to N6-succinyllysine; alternate: K1471, K1479, and K1486. N6-glutaryllysine; alternate is present on residues K1479 and K1486.

Can form homooligomers (monomers as predominant form and dimers). In terms of assembly, (Microbial infection) Interacts with P.berghei (ANKA strain) phospholipid scramblase PLSCR; the interaction is involved in the interaction between parasite sporozoites and host hepatocytes. Undergoes proteolytic cleavage in the C-terminal region corresponding to the loss of approximately 12 AA residues from the C-terminus. In terms of processing, acetylation of Lys-287, Lys-603, Lys-841 and Lys-1291 is observed in liver mitochondria from fasted mice but not from fed mice. Post-translationally, succinylated at Lys-44, Lys-287 and Lys-1291. Desuccinylated at Lys-1291 by SIRT5, leading to activation. Glutarylated. Glutarylation levels increase during fasting. Deglutarylated by SIRT5 at Lys-55, Lys-219, Lys-412, Lys-889, Lys-892, Lys-915, Lys-1360 and Lys-1486, leading to activation. As to expression, expressed in hepatocytes (at protein level).

It is found in the mitochondrion. The protein resides in the nucleus. The protein localises to the nucleolus. It localises to the cell membrane. The catalysed reaction is hydrogencarbonate + NH4(+) + 2 ATP = carbamoyl phosphate + 2 ADP + phosphate + 2 H(+). Requires N-acetyl-L-glutamate (NAG) as an allosteric activator. In terms of biological role, involved in the urea cycle of ureotelic animals where the enzyme plays an important role in removing excess ammonia from the cell. The sequence is that of Carbamoyl-phosphate synthase [ammonia], mitochondrial (Cps1) from Mus musculus (Mouse).